The chain runs to 87 residues: Phosphoribosyl-ATP pyrophosphatase (87 aa).

Belongs to the PRA-PH family.

The protein localises to the cytoplasm. It catalyses the reaction 1-(5-phospho-beta-D-ribosyl)-ATP + H2O = 1-(5-phospho-beta-D-ribosyl)-5'-AMP + diphosphate + H(+). Its pathway is amino-acid biosynthesis; L-histidine biosynthesis; L-histidine from 5-phospho-alpha-D-ribose 1-diphosphate: step 2/9. In Corynebacterium glutamicum (strain ATCC 13032 / DSM 20300 / JCM 1318 / BCRC 11384 / CCUG 27702 / LMG 3730 / NBRC 12168 / NCIMB 10025 / NRRL B-2784 / 534), this protein is Phosphoribosyl-ATP pyrophosphatase (hisE).